The primary structure comprises 1315 residues: Claspin (1315 aa).

2 disordered regions span residues 22 to 276 and 345 to 474; these read EAAD…AARL and PADA…EQKT. S26, S42, S46, S53, S65, and S67 each carry phosphoserine. The span at 65–74 shows a compositional bias: acidic residues; it reads SDSEAEDRDD. The span at 91–101 shows a compositional bias: polar residues; it reads NLHSGKSQSRS. The span at 108–118 shows a compositional bias: acidic residues; sequence DSDESDMEETP. S109, S112, and S119 each carry phosphoserine. A compositionally biased stretch (polar residues) spans 119-128; that stretch reads SQESPETQEA. 2 stretches are compositionally biased toward basic and acidic residues: residues 153-178 and 186-197; these read LLRE…MEKI and TRCEESDADRPL. Positions 159 to 187 form a coiled coil; that stretch reads EGKAKSKRRLEKEERTMEKIRRLKKKETR. Over residues 205 to 228 the composition is skewed to acidic residues; sequence EDSDLFETGLEEENDSALEDEESL. A Phosphoserine modification is found at S220. A compositionally biased stretch (basic residues) spans 235 to 245; the sequence is VKNKVKNRKKK. The residue at position 255 (S255) is a Phosphoserine. Basic and acidic residues-rich tracts occupy residues 391–415 and 455–470; these read ACGK…DDRP and EELK…EGMP. Residue S522 is modified to Phosphoserine. The stretch at 599–626 forms a coiled coil; it reads EKLQMLKAKLQEAMKLRRLEERQKRQAL. Residues 625–691 form a disordered region; it reads ALFKLDNEDG…SSDIGKSVAL (67 aa). Residues 632–657 show a composition bias toward acidic residues; that stretch reads EDGFEEEEEEEEMTDESEEDGEEETT. Positions 669-679 are enriched in basic and acidic residues; the sequence is KDEKETDKENT. Phosphoserine is present on residues S698, S701, S709, S722, and S740. The tract at residues 713–750 is disordered; sequence MGYFPTEEKSETDEYLAKQSDKLDEDDSSSLLTKESSH. Residues 741–750 show a composition bias toward low complexity; sequence SSLLTKESSH. Phosphoserine occurs at positions 785, 787, 810, 816, and 823. K868 is subject to N6-acetyllysine. CKB motif repeat units follow at residues 887 to 896 and 917 to 926; these read ELLDLCTGQF and ELLNLCSGKF. T893 bears the Phosphothreonine; by CHEK1 mark. 2 disordered regions span residues 924–1002 and 1032–1052; these read GKFP…NDEE and EDEA…DGEE. S932 bears the Phosphoserine mark. One copy of the CKB motif 3 repeat lies at 954 to 963; that stretch reads EALALCSGSF. Residues 966–1063 form an acidic patch region; it reads DREEEGEEEE…DEYEEDVIDE (98 aa). Acidic residues-rich tracts occupy residues 967–977, 990–1002, and 1043–1052; these read REEEGEEEEFG, SDED…NDEE, and GSEDEYDGEE. Residues S990, S996, and S998 each carry the phosphoserine modification. Residues 1001–1036 adopt a coiled-coil conformation; it reads EELALDLEDDEEELLKQSEKMKRQMRLKKYLEDEAE. Phosphoserine is present on residues S1133 and S1265. Residues 1264 to 1315 form a disordered region; that stretch reads LSPTKAEAAKDSSKPQVRRRGLSSMMSPSPKRLKTNGSSPGPKRSIFRYLES.

It belongs to the claspin family. In terms of assembly, interacts (phosphorylation-dependent) with CHEK1; regulates CLSPN function in checkpoint for DNA damage and replication. Interacts with ATR and RAD9A and these interactions are slightly reduced during checkpoint activation. Interacts with BRCA1 and this interaction increases during checkpoint activation. Interacts with TIMELESS; the interaction is required for leading-strand replication. Associates with the MCM2-7 complex and other replisome factors. Interacts (via the acidic patch) with CDC7; the interaction is required for phosphorylation of MCM proteins and CLASPIN by CDC7. Interacts with PCNA. Interacts with FZR1. Phosphorylated. Undergoes ATR-dependent phosphorylation by CHEK1 during activation of DNA replication or damage checkpoints. Phosphorylation by CSNK1G1/CK1 promotes CHEK1 binding. Phosphorylated by CDC7 during DNA replication, phosphorylation inhibits interaction between the acidic patch and N-terminal segments leading to increased binding to DNA and PCNA. In terms of processing, ubiquitinated by the anaphase promoting complex/cyclosome (APC/C) during G1 phase, leading to its degradation by the proteasome. Ubiquitination is mediated via its interaction with FZR1/CDH1. Following DNA damage, it is deubiquitinated by USP28 in G2 phase, preventing its degradation. Post-translationally, proteolytically cleaved by caspase-7 (CASP7) in response to apoptosis, leading to its inactivation.

It localises to the nucleus. Required for checkpoint mediated cell cycle arrest in response to inhibition of DNA replication or to DNA damage induced by both ionizing and UV irradiation. Adapter protein which binds to BRCA1 and the checkpoint kinase CHEK1 and facilitates the ATR-dependent phosphorylation of both proteins. Also required to maintain normal rates of replication fork progression during unperturbed DNA replication. Binds directly to DNA, with particular affinity for branched or forked molecules and interacts with multiple protein components of the replisome such as the MCM2-7 complex and TIMELESS. Important for initiation of DNA replication, recruits kinase CDC7 to phosphorylate MCM2-7 components. The polypeptide is Claspin (Clspn) (Mus musculus (Mouse)).